The chain runs to 239 residues: Phosphoribosylaminoimidazole-succinocarboxamide synthase (239 aa).

This sequence belongs to the SAICAR synthetase family.

It carries out the reaction 5-amino-1-(5-phospho-D-ribosyl)imidazole-4-carboxylate + L-aspartate + ATP = (2S)-2-[5-amino-1-(5-phospho-beta-D-ribosyl)imidazole-4-carboxamido]succinate + ADP + phosphate + 2 H(+). Its pathway is purine metabolism; IMP biosynthesis via de novo pathway; 5-amino-1-(5-phospho-D-ribosyl)imidazole-4-carboxamide from 5-amino-1-(5-phospho-D-ribosyl)imidazole-4-carboxylate: step 1/2. This is Phosphoribosylaminoimidazole-succinocarboxamide synthase from Acinetobacter baumannii (strain AB307-0294).